Here is a 160-residue protein sequence, read N- to C-terminus: Cyanate hydratase (160 aa).

Residues arginine 100, glutamate 103, and serine 126 contribute to the active site.

It belongs to the cyanase family.

It catalyses the reaction cyanate + hydrogencarbonate + 3 H(+) = NH4(+) + 2 CO2. Its function is as follows. Catalyzes the reaction of cyanate with bicarbonate to produce ammonia and carbon dioxide. The polypeptide is Cyanate hydratase (Emericella nidulans (strain FGSC A4 / ATCC 38163 / CBS 112.46 / NRRL 194 / M139) (Aspergillus nidulans)).